We begin with the raw amino-acid sequence, 127 residues long: NHP2-like protein 1 homolog (127 aa).

Belongs to the eukaryotic ribosomal protein eL8 family.

It is found in the nucleus. It localises to the nucleolus. Binds to the 5'-stem-loop of U4 snRNA and may play a role in the late stage of spliceosome assembly. The protein undergoes a conformational change upon RNA-binding. The sequence is that of NHP2-like protein 1 homolog (hoip) from Drosophila melanogaster (Fruit fly).